Consider the following 113-residue polypeptide: UPF0122 protein LAF_1235 (113 aa).

The protein belongs to the UPF0122 family.

Its function is as follows. Might take part in the signal recognition particle (SRP) pathway. This is inferred from the conservation of its genetic proximity to ftsY/ffh. May be a regulatory protein. In Limosilactobacillus fermentum (strain NBRC 3956 / LMG 18251) (Lactobacillus fermentum), this protein is UPF0122 protein LAF_1235.